A 65-amino-acid polypeptide reads, in one-letter code: Large ribosomal subunit protein bL35 (65 aa).

The tract at residues 1–25 (MPKMKSHRGAAKRFKKTGTGKLKRA) is disordered.

This sequence belongs to the bacterial ribosomal protein bL35 family.

The polypeptide is Large ribosomal subunit protein bL35 (Clostridium botulinum (strain Eklund 17B / Type B)).